Consider the following 337-residue polypeptide: Lipoyl synthase (337 aa).

[4Fe-4S] cluster is bound by residues Cys-81, Cys-86, Cys-92, Cys-107, Cys-111, Cys-114, and Ser-323. Positions 93-312 (FSHGTATFMI…EEYGNALGFS (220 aa)) constitute a Radical SAM core domain.

Belongs to the radical SAM superfamily. Lipoyl synthase family. [4Fe-4S] cluster serves as cofactor.

It is found in the cytoplasm. It carries out the reaction [[Fe-S] cluster scaffold protein carrying a second [4Fe-4S](2+) cluster] + N(6)-octanoyl-L-lysyl-[protein] + 2 oxidized [2Fe-2S]-[ferredoxin] + 2 S-adenosyl-L-methionine + 4 H(+) = [[Fe-S] cluster scaffold protein] + N(6)-[(R)-dihydrolipoyl]-L-lysyl-[protein] + 4 Fe(3+) + 2 hydrogen sulfide + 2 5'-deoxyadenosine + 2 L-methionine + 2 reduced [2Fe-2S]-[ferredoxin]. It participates in protein modification; protein lipoylation via endogenous pathway; protein N(6)-(lipoyl)lysine from octanoyl-[acyl-carrier-protein]: step 2/2. Catalyzes the radical-mediated insertion of two sulfur atoms into the C-6 and C-8 positions of the octanoyl moiety bound to the lipoyl domains of lipoate-dependent enzymes, thereby converting the octanoylated domains into lipoylated derivatives. The chain is Lipoyl synthase from Xanthomonas campestris pv. campestris (strain 8004).